A 504-amino-acid polypeptide reads, in one-letter code: MXXXXGYLEFDGAQQQSFLYPLFFREYIYVLAYDHGLNRLNRNRSIFLENADYDKRYSSLIVKRLILRMSEQNRLITSTKDFSQNPFLGHTHLFYYQMISVLFAVIVEIPFSLRLGSSFEGKKLKKSYNLQSIHSIFPFLEDKLSHFNYVLDVLIPYPIHLEILVQTLRYRVKDASSLHFFRFCLYEYCSWKNFDIKKKSIFNPRFFLFLYNSHVCEYESIFFFLRKRSSHLRSTSYEVLFERIFFYGKIQHFFKVFVNNFPAILGLLKDPFIHYVRYRGKCILATKDTPLLMNKWKYYFVNLWQCYFSIWFQPQKANINQLYKANLEFLGYMSSLRLNPLVVRSQMLENSFLIDNVRIKLDSKIPISSIIGSLAKDKFCNVLGHPISKANWTDSSDSDILNRFVRICRNISHYYSGSSKKKILYRIKYILRLCCVKTLARKHKSTVRAFLKRLGSGLLEEFLTGEDQVLSLIFPRSFYASKRFFRVRIWYLDILYLNDLVNHE.

The protein belongs to the intron maturase 2 family. MatK subfamily.

The protein resides in the plastid. The protein localises to the chloroplast. In terms of biological role, usually encoded in the trnK tRNA gene intron. Probably assists in splicing its own and other chloroplast group II introns. The chain is Maturase K from Matthiola incana (Common stock).